Here is a 100-residue protein sequence, read N- to C-terminus: MNRKVTAIALAAIIWATAAQGFLMFKQGRCLCIGPGMKAVKMAEIEKASVIYPSNGCDKVEVIVTMKAHKRQRCLDPRSKQARLIMQAIEKKNFLRRQNM.

The N-terminal stretch at Met-1–Gly-21 is a signal peptide. Cystine bridges form between Cys-30–Cys-57 and Cys-32–Cys-74.

The protein belongs to the intercrine alpha (chemokine CxC) family. As to quaternary structure, interacts with TNFAIP6 (via Link domain).

It localises to the secreted. Chemotactic for interleukin-activated T-cells but not unstimulated T-cells, neutrophils or monocytes. Induces calcium release in activated T-cells. Binds to CXCR3. May play an important role in CNS diseases which involve T-cell recruitment. May play a role in skin immune responses. The sequence is that of C-X-C motif chemokine 11 (Cxcl11) from Mus musculus (Mouse).